The chain runs to 317 residues: L-lactate dehydrogenase (317 aa).

NAD(+) contacts are provided by residues Val17, Asp38, Lys43, Tyr68, and 82–83; that span reads GV. Arg91 is a substrate binding site. Residues Ser104, 121–123, and Ser146 each bind NAD(+); that span reads VSN. Substrate is bound at residue 123 to 126; it reads NPVD. 151-154 is a binding site for substrate; it reads DTSR. 2 residues coordinate beta-D-fructose 1,6-bisphosphate: Lys156 and His171. His178 functions as the Proton acceptor in the catalytic mechanism. Tyr224 carries the post-translational modification Phosphotyrosine. Thr233 is a substrate binding site.

Belongs to the LDH/MDH superfamily. LDH family. Homotetramer.

It is found in the cytoplasm. The catalysed reaction is (S)-lactate + NAD(+) = pyruvate + NADH + H(+). It functions in the pathway fermentation; pyruvate fermentation to lactate; (S)-lactate from pyruvate: step 1/1. Its activity is regulated as follows. Allosterically activated by fructose 1,6-bisphosphate (FBP). Catalyzes the conversion of lactate to pyruvate. This Clostridium perfringens (strain SM101 / Type A) protein is L-lactate dehydrogenase.